Consider the following 1035-residue polypeptide: Probable LRR receptor-like serine/threonine-protein kinase At1g53440 (1035 aa).

The signal sequence occupies residues 1–26; the sequence is MGFFFSTRKGLLLIIFICLDIFGSNA. Topologically, residues 27 to 607 are extracellular; that stretch reads QLLPEDEVQT…VDTGKPLSNG (581 aa). 4 N-linked (GlcNAc...) asparagine glycosylation sites follow: Asn-46, Asn-75, Asn-83, and Asn-110. LRR repeat units follow at residues 87 to 110, 111 to 135, 137 to 158, 160 to 182, 183 to 206, 208 to 232, and 234 to 254; these read VCRV…EFGN, LTRL…LSQI, LEIL…LGQI, TLTD…LGNL, RSLK…LSNL, NLTN…NWTR, and VRLD…ISNL. Asn-194, Asn-208, and Asn-229 each carry an N-linked (GlcNAc...) asparagine glycan. 2 N-linked (GlcNAc...) asparagine glycosylation sites follow: Asn-256 and Asn-277. LRR repeat units follow at residues 278–302, 303–326, 328–349, and 350–372; these read MTNM…IGTS, MTML…TFRS, NAFN…QFIL, and DSKQ…SCNQ. N-linked (GlcNAc...) asparagine glycans are attached at residues Asn-317, Asn-337, Asn-361, Asn-386, Asn-469, and Asn-559. A helical membrane pass occupies residues 608 to 628; that stretch reads VVAGIVIAACVAFGLLVLVIL. The Cytoplasmic segment spans residues 629–1035; sequence RLTGYLGGKE…LDDLTDVEIE (407 aa). Thr-656 bears the Phosphothreonine mark. Residues 667-948 enclose the Protein kinase domain; the sequence is FDPENKIGEG…QGKIKVQPPL (282 aa). Residues 673–681 and Lys-695 contribute to the ATP site; that span reads IGEGGFGPV. Tyr-740 is subject to Phosphotyrosine. The active-site Proton acceptor is the Asp-793. Ser-826 is subject to Phosphoserine. Thr-827 and Thr-832 each carry phosphothreonine. Tyr-840 is modified (phosphotyrosine). The tract at residues 969–1035 is disordered; the sequence is LSQDSESQVS…LDDLTDVEIE (67 aa). Over residues 972-981 the composition is skewed to polar residues; that stretch reads DSESQVSTYT. A compositionally biased stretch (low complexity) spans 1009–1023; it reads SLLQQEEGNSSSSSR.

The protein belongs to the protein kinase superfamily. Ser/Thr protein kinase family.

Its subcellular location is the cell membrane. It carries out the reaction L-seryl-[protein] + ATP = O-phospho-L-seryl-[protein] + ADP + H(+). The catalysed reaction is L-threonyl-[protein] + ATP = O-phospho-L-threonyl-[protein] + ADP + H(+). The sequence is that of Probable LRR receptor-like serine/threonine-protein kinase At1g53440 from Arabidopsis thaliana (Mouse-ear cress).